We begin with the raw amino-acid sequence, 856 residues long: Rod cGMP-specific 3',5'-cyclic phosphodiesterase subunit beta (856 aa).

At Ser2 the chain carries N-acetylserine. 2 consecutive GAF domains span residues 71 to 220 and 252 to 429; these read NMER…TLNL and DIER…GWSV. The 334-residue stretch at 481 to 814 folds into the PDEase domain; sequence EEDELGILLK…KEWKALADEY (334 aa). His557 functions as the Proton donor in the catalytic mechanism. A divalent metal cation-binding residues include His561, His597, Asp598, and Asp718. Positions 823–833 are enriched in basic and acidic residues; it reads EEKQQQEDRTT. Residues 823–842 are disordered; the sequence is EEKQQQEDRTTAKKAGTEIC. Cys853 carries S-geranylgeranyl cysteine lipidation. The propeptide at 854–856 is removed in mature form; the sequence is CIL.

This sequence belongs to the cyclic nucleotide phosphodiesterase family. In terms of assembly, oligomer composed of two catalytic chains (alpha and beta), an inhibitory chain (gamma) and the delta chain. Requires a divalent metal cation as cofactor.

The protein localises to the membrane. It is found in the cell projection. Its subcellular location is the cilium. The protein resides in the photoreceptor outer segment. The enzyme catalyses 3',5'-cyclic GMP + H2O = GMP + H(+). In terms of biological role, rod-specific cGMP phosphodiesterase that catalyzes the hydrolysis of 3',5'-cyclic GMP. Necessary for the formation of a functional phosphodiesterase holoenzyme. Involved in retinal circadian rhythm photoentrainment via modulation of UVA and orange light-induced phase-shift of the retina clock. May participate in processes of transmission and amplification of the visual signal. The protein is Rod cGMP-specific 3',5'-cyclic phosphodiesterase subunit beta of Canis lupus familiaris (Dog).